Reading from the N-terminus, the 430-residue chain is Phosphomethylpyrimidine synthase (430 aa).

Residues N68, M96, Y125, H164, 186–188, 227–230, and E266 each bind substrate; these read SRG and DALR. H270 provides a ligand contact to Zn(2+). A substrate-binding site is contributed by Y293. Residue H334 participates in Zn(2+) binding. C410, C413, and C417 together coordinate [4Fe-4S] cluster.

This sequence belongs to the ThiC family. [4Fe-4S] cluster serves as cofactor.

It carries out the reaction 5-amino-1-(5-phospho-beta-D-ribosyl)imidazole + S-adenosyl-L-methionine = 4-amino-2-methyl-5-(phosphooxymethyl)pyrimidine + CO + 5'-deoxyadenosine + formate + L-methionine + 3 H(+). It functions in the pathway cofactor biosynthesis; thiamine diphosphate biosynthesis. In terms of biological role, catalyzes the synthesis of the hydroxymethylpyrimidine phosphate (HMP-P) moiety of thiamine from aminoimidazole ribotide (AIR) in a radical S-adenosyl-L-methionine (SAM)-dependent reaction. The polypeptide is Phosphomethylpyrimidine synthase (Pyrobaculum aerophilum (strain ATCC 51768 / DSM 7523 / JCM 9630 / CIP 104966 / NBRC 100827 / IM2)).